The sequence spans 183 residues: ATP-dependent protease subunit HslV (183 aa).

Residue Thr-9 is part of the active site. Na(+) is bound by residues Ala-164, Cys-167, and Thr-170.

It belongs to the peptidase T1B family. HslV subfamily. A double ring-shaped homohexamer of HslV is capped on each side by a ring-shaped HslU homohexamer. The assembly of the HslU/HslV complex is dependent on binding of ATP.

It localises to the cytoplasm. The catalysed reaction is ATP-dependent cleavage of peptide bonds with broad specificity.. With respect to regulation, allosterically activated by HslU binding. In terms of biological role, protease subunit of a proteasome-like degradation complex believed to be a general protein degrading machinery. This chain is ATP-dependent protease subunit HslV, found in Hydrogenovibrio crunogenus (strain DSM 25203 / XCL-2) (Thiomicrospira crunogena).